The chain runs to 139 residues: Non-structural protein 1 (139 aa).

A DLNP; interaction with MAP1B motif is present at residues 136-139 (DLNS).

It belongs to the pneumovirus non-structural protein 1 family. Monomer. Homomultimer. Heteromultimer with NS2. Interacts with the matrix protein M. Interacts with host ELOC and CUL2; this interaction allows NS1 to form an active E3 ligase with ELOC and CUL2. Interacts with host IRF3; this interaction leads to the disrupted association of IRF3 with CREBBP and thus reduced binding of IRF3 to the IFN-beta promoter. Interacts with host MAVS; this interaction prevents MAVS binding to RIGI and inhibits signaling pathway leading to interferon production. Interacts with host MAP1B/microtubule-associated protein 1B. Interacts with host TRIM25 (via SPRY domain); this interaction suppresses RIGI ubiquitination and results in decreased interaction between RIGI and MAVS.

The protein localises to the host cytoplasm. It is found in the host mitochondrion. Its subcellular location is the host nucleus. Functionally, plays a major role in antagonizing the type I IFN-mediated antiviral response by degrading or inhibiting multiple cellular factors required for either IFN induction or response pathways. Acts cooperatively with NS2 to repress activation and nuclear translocation of host IFN-regulatory factor IRF3. Also disrupts the association of IRF3 with CREBBP. Interacts with host mitochondrial-associated membrane (MAM) MAVS and prevents the interaction with RIGI. Interacts with TRIM25 to suppress TRIM25-mediated RIGI ubiquitination and thereby RIGI-MAVS interaction. Together with NS2, participates in the proteasomal degradation of host STAT2, IRF3, IRF7, TBK1 and RIGI through a NS-degradasome involving CUL2 and Elongin-C. The degradasome requires an intact mitochondrial MAVS. Decreases the levels of host TRAF3 and IKBKE/IKK-epsilon. As functions other than disruptions of the type I IFN-mediated antiviral signaling pathways, induces host SOCS1 and SOCS3 expression. Suppresses premature apoptosis by an NF-kappa-B-dependent, interferon-independent mechanism and thus facilitates virus growth. Additionally, NS1 may serve some inhibitory role in viral transcription and RNA replication. Suppresses proliferation and activation of host CD103+ CD8+ cytotoxic T-lymphocytes and Th17 helper T-lymphocytes. In Homo sapiens (Human), this protein is Non-structural protein 1 (1C).